The sequence spans 225 residues: MVAFEKLEKLLGYSFKNKELLIEALSHPSLRQHHEYKDDKDYERLEFLGDAVLNLVVTEILFKNFANYNEGNLAKIRSYLVCKETICVVGTKLTLKDYIIMTHGEEVAGGRDNPNNIENATEALIAAIYLDSNIETTRNIIGKLWAEFIKIQNLTDYDPKTALQEWAQASSHHLPIYRLIKREGAAHSSTFTVLVKVKDYKQIGTGHSIKEAEKNAARKLLHKLK.

In terms of domain architecture, RNase III spans 4–133; that stretch reads FEKLEKLLGY…LIAAIYLDSN (130 aa). Glu46 is a Mg(2+) binding site. Asp50 is a catalytic residue. Mg(2+) contacts are provided by Asn119 and Glu122. The active site involves Glu122. Residues 158 to 225 enclose the DRBM domain; the sequence is DPKTALQEWA…AARKLLHKLK (68 aa).

This sequence belongs to the ribonuclease III family. Homodimer. Requires Mg(2+) as cofactor.

It is found in the cytoplasm. The enzyme catalyses Endonucleolytic cleavage to 5'-phosphomonoester.. Digests double-stranded RNA. Involved in the processing of primary rRNA transcript to yield the immediate precursors to the large and small rRNAs (23S and 16S). Processes some mRNAs, and tRNAs when they are encoded in the rRNA operon. Processes pre-crRNA and tracrRNA of type II CRISPR loci if present in the organism. In Rickettsia felis (strain ATCC VR-1525 / URRWXCal2) (Rickettsia azadi), this protein is Ribonuclease 3.